The primary structure comprises 72 residues: Translation initiation factor IF-1 (72 aa).

Residues 1–72 (MAKDDVIEVE…TRGRITYRFK (72 aa)) enclose the S1-like domain.

The protein belongs to the IF-1 family. As to quaternary structure, component of the 30S ribosomal translation pre-initiation complex which assembles on the 30S ribosome in the order IF-2 and IF-3, IF-1 and N-formylmethionyl-tRNA(fMet); mRNA recruitment can occur at any time during PIC assembly.

It is found in the cytoplasm. Its function is as follows. One of the essential components for the initiation of protein synthesis. Stabilizes the binding of IF-2 and IF-3 on the 30S subunit to which N-formylmethionyl-tRNA(fMet) subsequently binds. Helps modulate mRNA selection, yielding the 30S pre-initiation complex (PIC). Upon addition of the 50S ribosomal subunit IF-1, IF-2 and IF-3 are released leaving the mature 70S translation initiation complex. In Streptococcus pneumoniae serotype 2 (strain D39 / NCTC 7466), this protein is Translation initiation factor IF-1.